The primary structure comprises 181 residues: Isopentenyl-diphosphate Delta-isomerase (181 aa).

2 residues coordinate Mn(2+): H24 and H30. The Nudix hydrolase domain occupies 28 to 168 (LLHLAFSVLL…PDTFSVWFPT (141 aa)). Residue C68 is part of the active site. Mg(2+) is bound at residue C68. H70 lines the Mn(2+) pocket. E88 contacts Mg(2+). The Mn(2+) site is built by E117 and E119. E119 is an active-site residue.

Belongs to the IPP isomerase type 1 family. Mg(2+) serves as cofactor. Requires Mn(2+) as cofactor.

Its subcellular location is the cytoplasm. It catalyses the reaction isopentenyl diphosphate = dimethylallyl diphosphate. It participates in isoprenoid biosynthesis; dimethylallyl diphosphate biosynthesis; dimethylallyl diphosphate from isopentenyl diphosphate: step 1/1. Functionally, catalyzes the 1,3-allylic rearrangement of the homoallylic substrate isopentenyl (IPP) to its highly electrophilic allylic isomer, dimethylallyl diphosphate (DMAPP). The sequence is that of Isopentenyl-diphosphate Delta-isomerase from Aliivibrio fischeri (strain ATCC 700601 / ES114) (Vibrio fischeri).